The sequence spans 813 residues: MESSTKRIKMDIFNFPTIKETRTPEEVAESYAEAVKLHPFYDNAHCVIDFYDSGTIKDGRGEIIGVVLRKALPKYATSMASALLISAAVRTSLRSMIFGGESPLSGIAGYFDYRGSPVELKSRKTSFTYEHEEAWSAVFPVVDYVSEIYRHVAPERWKAQNNAIPDLVRIHGTPFSTLTINSRFRTASHTDVGDFDAGYSCIACIDGKFKGLALTFDDFRINVLMQPRDVMVFDSHHFHSNTEVEVSCSEEDWKRLTCVFYYRTALGEPSSYAEYRRRLEKSKQDPSFTPVVSNVMMKENGTNLNRPSPVHPVPPSPFWLPMLAHCLQHCASAAQSVHEAMTADGSQLAEIIFGEPLSTSDGIPLRGDDEKLKANGDTGAKPLSRLGGFSETDLMVSTAAEKRKYLDSEFLSHCISAQLLDMWKQARARWLELVGKEWKHMLTLNPERKDFLWKNRSEMNSAFFDLCEVGKQVMLGLLDKEAALPKEEQAFWTMYAVHLSAACAEELHMPHDAMSLRKLNVKLKDFNFGGTRYFKDMPPEEQQRRMERKQRIEEARRHGMTGAHEKRANWLTNDSFDYQTEDCVVDYAKHKWVLPERHAKAVTKNVHTAWLPTREEVVRVLVVLPDLQIRVEGVDCKLEKPDTVEDSSEWVRLVSSPAVHRLLAAAQRNLQLPDDVMHGNIHIRFVFHSTLPTDMYDFVVLQHVLSRIPDDVLASSYITRAAALCSGCLFVEETDVQCRQYYTLKYSIRRNYDAVAPHFFQQLHQASYGTKMARVRTKGELEALIPTVCCARYKLQGSPLNTTIHVVSPTAPH.

The thymine dioxygenase stretch occupies residues 62–264; that stretch reads EIIGVVLRKA…RLTCVFYYRT (203 aa). The Fe cation site is built by His-189, Asp-191, and His-239. Position 255 (Arg-255) interacts with 2-oxoglutarate. The segment at 392-561 is DNA-binding JBP1 domain; sequence TDLMVSTAAE…IEEARRHGMT (170 aa).

This sequence belongs to the TET family. JBP1 subfamily. As to quaternary structure, monomer. Binds to DNA as a monomer. Requires Fe(2+) as cofactor.

The protein localises to the nucleus. It carries out the reaction thymine + 2-oxoglutarate + O2 = 5-hydroxymethyluracil + succinate + CO2. In terms of biological role, dioxygenase that catalyzes the first step of DNA base J (beta-d-glucosyl-HOMedU) biosynthesis by converting thymine to 5-hydroxymethyluracil (HOMedU). DNA base J is a hypermodified thymidine residue found in the genome of kinetoplastid parasites, which is localized primarily to repetitive DNA, namely the telomeres, and is implicated in the regulation of antigenic variation. Also specifically binds to base J-containing DNA (J-DNA). Involved in propagation and maintenance of DNA base J synthesis initiated by JBP2 by specifically binding already synthesized DNA base J and propagating J synthesis. Thymine dioxygenase activity and J-DNA-binding are independent functions. In Leishmania braziliensis, this protein is Thymine dioxygenase JBP1 (JBP1).